The sequence spans 158 residues: RNA pyrophosphohydrolase (158 aa).

The region spanning 6–150 (GYRLNVGIVL…KRDVYRKVMQ (145 aa)) is the Nudix hydrolase domain. A Nudix box motif is present at residues 39-60 (GGINIGETPEQAMYRELFEEIG).

Belongs to the Nudix hydrolase family. RppH subfamily. The cofactor is a divalent metal cation.

Functionally, accelerates the degradation of transcripts by removing pyrophosphate from the 5'-end of triphosphorylated RNA, leading to a more labile monophosphorylated state that can stimulate subsequent ribonuclease cleavage. The chain is RNA pyrophosphohydrolase from Blochmanniella pennsylvanica (strain BPEN).